A 110-amino-acid chain; its full sequence is DNA-binding protein Mhun_3016 (110 aa).

It belongs to the PDCD5 family.

This Methanospirillum hungatei JF-1 (strain ATCC 27890 / DSM 864 / NBRC 100397 / JF-1) protein is DNA-binding protein Mhun_3016.